The following is a 302-amino-acid chain: Acetyl-coenzyme A carboxylase carboxyl transferase subunit beta (302 aa).

In terms of domain architecture, CoA carboxyltransferase N-terminal spans 25–294; that stretch reads VWTKCDSCGQ…PQEDIVTEAA (270 aa). Zn(2+) contacts are provided by cysteine 29, cysteine 32, cysteine 48, and cysteine 51. The C4-type zinc finger occupies 29–51; it reads CDSCGQVLYRAELERNLEVCPKC.

The protein belongs to the AccD/PCCB family. In terms of assembly, acetyl-CoA carboxylase is a heterohexamer composed of biotin carboxyl carrier protein (AccB), biotin carboxylase (AccC) and two subunits each of ACCase subunit alpha (AccA) and ACCase subunit beta (AccD). Requires Zn(2+) as cofactor.

It localises to the cytoplasm. The enzyme catalyses N(6)-carboxybiotinyl-L-lysyl-[protein] + acetyl-CoA = N(6)-biotinyl-L-lysyl-[protein] + malonyl-CoA. It participates in lipid metabolism; malonyl-CoA biosynthesis; malonyl-CoA from acetyl-CoA: step 1/1. Functionally, component of the acetyl coenzyme A carboxylase (ACC) complex. Biotin carboxylase (BC) catalyzes the carboxylation of biotin on its carrier protein (BCCP) and then the CO(2) group is transferred by the transcarboxylase to acetyl-CoA to form malonyl-CoA. The sequence is that of Acetyl-coenzyme A carboxylase carboxyl transferase subunit beta from Erwinia tasmaniensis (strain DSM 17950 / CFBP 7177 / CIP 109463 / NCPPB 4357 / Et1/99).